The chain runs to 1840 residues: MASSSLPNLVPPGPHCLRPFTPESLAAIEQRAVEEEARLQRNKQMEIEEPERKPRSDLEAGKNLPLIYGDPPPEVIGIPLEDLDPYYSDKKTFIVLNKGKAIFRFSATPALYLLSPFSIVRRVAIKVLIHALFSMFIMITILTNCVFMTMSNPPSWSKHVEYTFTGIYTFESLIKMLARGFCIDDFTFLRDPWNWLDFSVITMAYVTEFVDLGNISALRTFRVLRALKTITVIPGLKTIVGALIQSVKKLSDVMILTVFCLSVFALVGLQLFMGNLRQKCVRWPPPMNDTNTTWYGNDTWYSNDTWYGNDTWYINDTWNSQESWAGNSTFDWEAYINDEGNFYFLEGSNDALLCGNSSDAGHCPEGYECIKAGRNPNYGYTSYDTFSWAFLALFRLMTQDYWENLFQLTLRAAGKTYMIFFVVIIFLGSFYLINLILAVVAMAYAEQNEATLAEDQEKEEEFQQMLEKYKKHQEELEKAKAAQALESGEEADGDPTHNKDCNGSLDASGEKGPPRPSCSADSAISDAMEELEEAHQKCPPWWYKCAHKVLIWNCCAPWVKFKHIIYLIVMDPFVDLGITICIVLNTLFMAMEHYPMTEHFDNVLSVGNLVFTGIFTAEMVLKLIAMDPYEYFQQGWNIFDSFIVTLSLVELGLANVQGLSVLRSFRLLRVFKLAKSWPTLNMLIKIIGNSVGALGNLTLVLAIIVFIFAVVGMQLFGKSYKECVCKIASDCNLPRWHMNDFFHSFLIVFRILCGEWIETMWDCMEVAGQAMCLTVFLMVMVIGNLVVLNLFLALLLSSFSADSLAASDEDGEMNNLQIAIGRIKWGIGFAKTFLLGLLRGKILSPKEIILSLGEPGGAGENAEESTPEDEKKEPPPEDKELKDNHILNHVGLTDGPRSSIELDHLNFINNPYLTIQVPIASEESDLEMPTEEETDAFSEPEDIKKPLQPLYDGNSSVCSTADYKPPEEDPEEQAEENPEGEQPEECFTEACVKRCPCLYVDISQGRGKMWWTLRRACFKIVEHNWFETFIVFMILLSSGALAFEDIYIEQRRVIRTILEYADKVFTYIFILEMLLKWVAYGFKVYFTNAWCWLDFLIVDVSIISLVANWLGYSELGPIKSLRTLRALRPLRALSRFEGMRVVVNALLGAIPSIMNVLLVCLIFWLIFSIMGVNLFAGKFYYCVNTTTSERFDISVVNNKSESESLMYTGQVRWMNVKVNYDNVGLGYLSLLQVATFKGWMDIMYAAVDSREKEEQPHYEVNLYMYLYFVIFIIFGSFFTLNLFIGVIIDNFNQQKKKFGGKDIFMTEEQKKYYNAMKKLGSKKPQKPIPRPQNKIQGMVYDFVTKQVFDISIMILICLNMVTMMVETDDQSQLKVDILYNINMVFIIIFTGECVLKMFALRHYYFTIGWNIFDFVVVILSIVGLALSDLIQKYFVSPTLFRVIRLARIGRVLRLIRGAKGIRTLLFALMMSLPALFNIGLLLFLVMFIYSIFGMSNFAYVKKESGIDDMFNFETFGNSIICLFEITTSAGWDGLLNPILNSGPPDCDPTLENPGTNVRGDCGNPSIGICFFCSYIIISFLIVVNMYIAIILENFNVATEESSEPLSEDDFEMFYETWEKFDPDATQFIDYSRLSDFVDTLQEPLKIAKPNKIKLITLDLPMVPGDKIHCLDILFALTKEVLGDSGEMDALKQTMEEKFMAANPSKVSYEPITTTLKRKQEEVCAIKIQRAYRRHLLQRSVKQASYMYRHSQDGNDDGAPEKEGLLANTMNKMYGHEKEGDGVQSQGEEEKASTEDAGPTVEPEPTSSSDTALTPSPPPLPPSSSPPQGQTVRPGVKESLV.

At M1–A131 the chain is on the cytoplasmic side. Over residues E36–A60 the composition is skewed to basic and acidic residues. Positions E36–N63 are disordered. Residues L113 to N448 form an I repeat. Residues L132–M150 form a helical membrane-spanning segment. The Extracellular segment spans residues S151–S157. A helical transmembrane segment spans residues K158–A178. Residues R179 to P192 lie on the Cytoplasmic side of the membrane. The helical transmembrane segment at W193–V210 threads the bilayer. Topologically, residues D211–S216 are extracellular. A helical membrane pass occupies residues A217–I233. Over P234 to D252 the chain is Cytoplasmic. A helical membrane pass occupies residues V253–F272. Residues M273–T385 are Extracellular-facing. C280 and C354 are oxidised to a cystine. Residues N288, N291, N297, N303, N309, N315, N327, and N356 are each glycosylated (N-linked (GlcNAc...) asparagine). Residues C363 and C369 are joined by a disulfide bond. The segment at residues F386–L410 is an intramembrane region (pore-forming). At R411–Y417 the chain is on the extracellular side. The helical transmembrane segment at M418 to A438 threads the bilayer. Over V439–P572 the chain is Cytoplasmic. Residues A481 to S522 are disordered. Residue S487 is modified to Phosphoserine. Residues C554–G826 form an II repeat. A helical transmembrane segment spans residues F573–M591. Over E592–N602 the chain is Extracellular. Residues V603–K622 form a helical membrane-spanning segment. Residues L623–W636 are Cytoplasmic-facing. The helical transmembrane segment at N637–V656 threads the bilayer. Residues Q657 to G658 are Extracellular-facing. Residues L659–S676 traverse the membrane as a helical segment. Over W677–G692 the chain is Cytoplasmic. The helical transmembrane segment at A693 to V711 threads the bilayer. The Extracellular portion of the chain corresponds to G712–D740. The cysteines at positions 725 and 731 are disulfide-linked. The segment at residues F741–W761 is an intramembrane region (pore-forming). The Extracellular segment spans residues D762–C772. C763 and C772 form a disulfide bridge. A helical transmembrane segment spans residues L773 to F791. Topologically, residues L792 to W1025 are cytoplasmic. Disordered stretches follow at residues E854–N884 and D925–P983. Basic and acidic residues predominate over residues E868–N884. 2 stretches are compositionally biased toward acidic residues: residues D925–P940 and E968–P983. An III repeat occupies R1006 to L1319. A helical membrane pass occupies residues F1026 to F1043. The Extracellular portion of the chain corresponds to E1044–T1056. A helical membrane pass occupies residues I1057–L1075. At K1076–A1089 the chain is on the cytoplasmic side. Residues W1090–N1108 traverse the membrane as a helical segment. The Extracellular segment spans residues W1109–G1116. Residues P1117–R1135 form a helical membrane-spanning segment. At F1136–S1152 the chain is on the cytoplasmic side. Residues I1153–V1172 traverse the membrane as a helical segment. Topologically, residues N1173–V1223 are extracellular. Residue N1198 is glycosylated (N-linked (GlcNAc...) asparagine). An intramembrane region (pore-forming) is located at residues G1224–A1245. Topologically, residues A1246–L1262 are extracellular. The chain crosses the membrane as a helical span at residues Y1263–I1284. At G1285 to V1347 the chain is on the cytoplasmic side. Residues I1303–M1305 are important for rapid channel inactivation. One copy of the IV repeat lies at I1328 to Q1626. A helical membrane pass occupies residues F1348–V1365. Residues E1366–D1376 are Extracellular-facing. Residues I1377 to L1395 traverse the membrane as a helical segment. Residues K1396 to I1407 are Cytoplasmic-facing. The helical transmembrane segment at G1408–A1425 threads the bilayer. At L1426–T1438 the chain is on the extracellular side. The helical transmembrane segment at L1439 to I1455 threads the bilayer. Residues R1456–A1474 are Cytoplasmic-facing. Residues L1475–F1492 traverse the membrane as a helical segment. Residues G1493–T1514 are Extracellular-facing. The pore-forming intramembrane region spans F1515–P1537. Residues I1538 to G1567 are Extracellular-facing. A disulfide bond links C1546 and C1561. The chain crosses the membrane as a helical span at residues I1568–I1590. Residues L1591–V1840 are Cytoplasmic-facing. The region spanning E1720–H1749 is the IQ domain. The segment at H1775–V1840 is disordered. A compositionally biased stretch (low complexity) spans P1804–T1813. Pro residues predominate over residues P1814–S1824.

This sequence belongs to the sodium channel (TC 1.A.1.10) family. Nav1.4/SCN4A subfamily. In terms of assembly, the Nav1.4 voltage-gated sodium channel consists of an ion-conducting alpha subunit SCN4A which is functional on its own and a regulatory beta subunit SCN1B. SCN1B strongly enhances the presence of SCN4A at the cell surface. SCN1B is also required for rapid channel inactivation and recovery after inactivation. It prevents the decrease of channel activity in response to repetitive, high-frequency depolarizations. Interacts with the syntrophins SNTA1, SNTB1 and SNTB2 (via PDZ domain); probably links SCN4A to the actin cytoskeleton and the extracellular matrix via the dystrophin-associated protein complex and regulates its localization in muscle cells. Interacts with TMEM233; probable regulator of the channel. In terms of tissue distribution, detected in skeletal muscle.

The protein resides in the cell membrane. The enzyme catalyses Na(+)(in) = Na(+)(out). Its activity is regulated as follows. Potently inhibited by tetrodotoxin and saxitoxin. Inhibited by the conotoxin GVIIJ. In terms of biological role, pore-forming subunit of Nav1.4, a voltage-gated sodium (Nav) channel that directly mediates the depolarizing phase of action potentials in excitable membranes. Navs, also called VGSCs (voltage-gated sodium channels) or VDSCs (voltage-dependent sodium channels), operate by switching between closed and open conformations depending on the voltage difference across the membrane. In the open conformation they allow Na(+) ions to selectively pass through the pore, along their electrochemical gradient. The influx of Na+ ions provokes membrane depolarization, initiating the propagation of electrical signals throughout cells and tissues. Highly expressed in skeletal muscles, Nav1.4 generates the action potential crucial for muscle contraction. The protein is Sodium channel protein type 4 subunit alpha of Rattus norvegicus (Rat).